The chain runs to 570 residues: Nucleoprotein (570 aa).

The segment at 54–241 (MRKEKRDDSD…IEPKKSAINI (188 aa)) is binding site for the cap structure m7GTP. Residues D390 and E392 each coordinate Mn(2+). Zn(2+) contacts are provided by E400, C507, H510, and C530. Residue D534 coordinates Mn(2+).

This sequence belongs to the arenaviridae nucleocapsid protein family. In terms of assembly, homomultimerizes to form the nucleocapsid. Binds to viral genomic RNA. Interacts with glycoprotein G2. Interacts with protein Z; this interaction probably directs the encapsidated genome to budding sites. Interacts with protein L; this interaction does not interfere with Z-L interaction. Interacts with host IKBKE (via Protein kinase domain); the interaction inhibits IKBKE kinase activity.

It localises to the virion. The protein resides in the host cytoplasm. Its function is as follows. Encapsidates the genome, protecting it from nucleases. The encapsidated genomic RNA is termed the nucleocapsid (NC). Serves as template for viral transcription and replication. The increased presence of protein N in host cell does not seem to trigger the switch from transcription to replication as observed in other negative strain RNA viruses. Through the interaction with host IKBKE, strongly inhibits the phosphorylation and nuclear translocation of host IRF3, a protein involved in interferon activation pathway, leading to the inhibition of interferon-beta and IRF3-dependent promoters activation. Also encodes a functional 3'-5' exoribonuclease that degrades preferentially dsRNA substrates and thereby participates in the suppression of interferon induction. The protein is Nucleoprotein of Mopeia virus (MOPV).